A 214-amino-acid chain; its full sequence is Non-structural protein NP-1 (214 aa).

Disordered stretches follow at residues 1 to 87 (MSSE…TNPY) and 192 to 214 (ESEE…NASN). Over residues 33–43 (SRSRSPIRRHG) the composition is skewed to basic residues. Over residues 44-55 (EKNLEYAHHSNQ) the composition is skewed to basic and acidic residues. Over residues 56–71 (ENRQSSYTALKTSDQA) the composition is skewed to polar residues. Residues 192-201 (ESEEVTDEEM) are compositionally biased toward acidic residues.

Belongs to the Bocaparvovirus Non-structural protein NP-1 family.

It localises to the host nucleus. Functionally, required for the expression of the capsid proteins. Performs the splicing and internal polyadenylation of the viral capsid-encoding mRNA precursor, which allows its maturation and expression. Transactivates the viral promoter. The protein is Non-structural protein NP-1 (NP1) of Human bocavirus 2 (HBoV2).